The chain runs to 176 residues: Ribosome rescue factor SmrB (176 aa).

The Smr domain maps to L98–E173.

Belongs to the SmrB family. Associates with collided ribosomes, but not with correctly translating polysomes.

In terms of biological role, acts as a ribosome collision sensor. Detects stalled/collided disomes (pairs of ribosomes where the leading ribosome is stalled and a second ribosome has collided with it) and endonucleolytically cleaves mRNA at the 5' boundary of the stalled ribosome. Stalled/collided disomes form a new interface (primarily via the 30S subunits) that binds SmrB. Cleaved mRNA becomes available for tmRNA ligation, leading to ribosomal subunit dissociation and rescue of stalled ribosomes. The protein is Ribosome rescue factor SmrB of Serratia proteamaculans (strain 568).